A 141-amino-acid polypeptide reads, in one-letter code: Large ribosomal subunit protein uL11 (141 aa).

This sequence belongs to the universal ribosomal protein uL11 family. Part of the ribosomal stalk of the 50S ribosomal subunit. Interacts with L10 and the large rRNA to form the base of the stalk. L10 forms an elongated spine to which L12 dimers bind in a sequential fashion forming a multimeric L10(L12)X complex. In terms of processing, one or more lysine residues are methylated.

Forms part of the ribosomal stalk which helps the ribosome interact with GTP-bound translation factors. The chain is Large ribosomal subunit protein uL11 from Exiguobacterium sp. (strain ATCC BAA-1283 / AT1b).